Reading from the N-terminus, the 95-residue chain is Small ribosomal subunit protein uS14 (95 aa).

It belongs to the universal ribosomal protein uS14 family. As to quaternary structure, part of the 30S ribosomal subunit. Contacts proteins S3 and S10.

Binds 16S rRNA, required for the assembly of 30S particles and may also be responsible for determining the conformation of the 16S rRNA at the A site. The protein is Small ribosomal subunit protein uS14 of Fusobacterium nucleatum subsp. nucleatum (strain ATCC 25586 / DSM 15643 / BCRC 10681 / CIP 101130 / JCM 8532 / KCTC 2640 / LMG 13131 / VPI 4355).